Consider the following 554-residue polypeptide: Protein translocase subunit SecD (554 aa).

6 consecutive transmembrane segments (helical) span residues 10-30 (LVIL…MFYA), 392-412 (AGMV…IASY), 414-434 (LFGF…FAVM), 435-455 (GAIG…TIGT), 491-511 (AIID…VLGA), and 516-536 (GFAV…IWVV).

Belongs to the SecD/SecF family. SecD subfamily. In terms of assembly, forms a complex with SecF. Part of the essential Sec protein translocation apparatus which comprises SecA, SecYEG and auxiliary proteins SecDF-YajC and YidC.

It localises to the cell inner membrane. Functionally, part of the Sec protein translocase complex. Interacts with the SecYEG preprotein conducting channel. SecDF uses the proton motive force (PMF) to complete protein translocation after the ATP-dependent function of SecA. This is Protein translocase subunit SecD from Rhodobacter capsulatus (strain ATCC BAA-309 / NBRC 16581 / SB1003).